We begin with the raw amino-acid sequence, 455 residues long: MNIVILAAGLGKRMRSALPKVLHPLAGKPLLAHVIETARSLSPTRLVVVVGHGGDRVRDMVGAPDVTFATQDQQLGTGHAVMQALDQLDDTVPTLVLYGDVPLTRAETLNALVGAAGQDHLGVLTVHLDDPTGYGRIVRDATGRITRIVEQKDANETQLAIHEVNTGILVCPTARLKTWLATLRNDNAQGEYYLTDVIERAASEGLPITSAHPLAEWETLGVNSKVQLAELERIHQRNLAQQLLEDGVTLIDPARIDIRGRLTCGRDVVIDIDCIFEGNVTLGDGVRIGAHAVIRDAAIQAGAEILPFCHIEQATVGAQSRIGPYARLRPGTELAEDVHIGNFVEVKNSQIAAHSKANHLAYVGDATVGSRVNIGAGTITCNYDGANKFRTIIEDDAFIGSDTQLVAPVRVGRGATLGAGTTLTKDAPEGQLTVSRARQTTVNGWQRPVKQKKDA.

Positions 1–225 (MNIVILAAGL…EWETLGVNSK (225 aa)) are pyrophosphorylase. UDP-N-acetyl-alpha-D-glucosamine is bound by residues 6-9 (LAAG), Lys-20, Gln-71, 76-77 (GT), 98-100 (YGD), Gly-135, Glu-150, Asn-165, and Asn-223. Asp-100 lines the Mg(2+) pocket. Asn-223 is a binding site for Mg(2+). A linker region spans residues 226–246 (VQLAELERIHQRNLAQQLLED). The tract at residues 247 to 455 (GVTLIDPARI…QRPVKQKKDA (209 aa)) is N-acetyltransferase. The UDP-N-acetyl-alpha-D-glucosamine site is built by Arg-329 and Lys-347. Catalysis depends on His-359, which acts as the Proton acceptor. Tyr-362 and Asn-373 together coordinate UDP-N-acetyl-alpha-D-glucosamine. Residues Ala-376, 382 to 383 (NY), Ser-401, Ala-419, and Arg-436 contribute to the acetyl-CoA site.

It in the N-terminal section; belongs to the N-acetylglucosamine-1-phosphate uridyltransferase family. The protein in the C-terminal section; belongs to the transferase hexapeptide repeat family. Homotrimer. The cofactor is Mg(2+).

It localises to the cytoplasm. The enzyme catalyses alpha-D-glucosamine 1-phosphate + acetyl-CoA = N-acetyl-alpha-D-glucosamine 1-phosphate + CoA + H(+). It carries out the reaction N-acetyl-alpha-D-glucosamine 1-phosphate + UTP + H(+) = UDP-N-acetyl-alpha-D-glucosamine + diphosphate. It functions in the pathway nucleotide-sugar biosynthesis; UDP-N-acetyl-alpha-D-glucosamine biosynthesis; N-acetyl-alpha-D-glucosamine 1-phosphate from alpha-D-glucosamine 6-phosphate (route II): step 2/2. Its pathway is nucleotide-sugar biosynthesis; UDP-N-acetyl-alpha-D-glucosamine biosynthesis; UDP-N-acetyl-alpha-D-glucosamine from N-acetyl-alpha-D-glucosamine 1-phosphate: step 1/1. The protein operates within bacterial outer membrane biogenesis; LPS lipid A biosynthesis. Its function is as follows. Catalyzes the last two sequential reactions in the de novo biosynthetic pathway for UDP-N-acetylglucosamine (UDP-GlcNAc). The C-terminal domain catalyzes the transfer of acetyl group from acetyl coenzyme A to glucosamine-1-phosphate (GlcN-1-P) to produce N-acetylglucosamine-1-phosphate (GlcNAc-1-P), which is converted into UDP-GlcNAc by the transfer of uridine 5-monophosphate (from uridine 5-triphosphate), a reaction catalyzed by the N-terminal domain. In Ralstonia nicotianae (strain ATCC BAA-1114 / GMI1000) (Ralstonia solanacearum), this protein is Bifunctional protein GlmU.